Here is a 405-residue protein sequence, read N- to C-terminus: Probable tRNA sulfurtransferase (405 aa).

Residues 60–165 enclose the THUMP domain; it reads ETIDQRLKLV…QDAIYISNQL (106 aa). ATP is bound by residues 183–184, 208–209, Arg-265, Gly-287, and Gln-296; these read ML and HF.

It belongs to the ThiI family.

It is found in the cytoplasm. The enzyme catalyses [ThiI sulfur-carrier protein]-S-sulfanyl-L-cysteine + a uridine in tRNA + 2 reduced [2Fe-2S]-[ferredoxin] + ATP + H(+) = [ThiI sulfur-carrier protein]-L-cysteine + a 4-thiouridine in tRNA + 2 oxidized [2Fe-2S]-[ferredoxin] + AMP + diphosphate. It carries out the reaction [ThiS sulfur-carrier protein]-C-terminal Gly-Gly-AMP + S-sulfanyl-L-cysteinyl-[cysteine desulfurase] + AH2 = [ThiS sulfur-carrier protein]-C-terminal-Gly-aminoethanethioate + L-cysteinyl-[cysteine desulfurase] + A + AMP + 2 H(+). The protein operates within cofactor biosynthesis; thiamine diphosphate biosynthesis. Catalyzes the ATP-dependent transfer of a sulfur to tRNA to produce 4-thiouridine in position 8 of tRNAs, which functions as a near-UV photosensor. Also catalyzes the transfer of sulfur to the sulfur carrier protein ThiS, forming ThiS-thiocarboxylate. This is a step in the synthesis of thiazole, in the thiamine biosynthesis pathway. The sulfur is donated as persulfide by IscS. This chain is Probable tRNA sulfurtransferase, found in Lactobacillus johnsonii (strain CNCM I-12250 / La1 / NCC 533).